Reading from the N-terminus, the 198-residue chain is Holliday junction resolvase RecU (198 aa).

Mg(2+) is bound by residues Thr-83, Asp-85, Glu-98, and Gln-117.

Belongs to the RecU family. It depends on Mg(2+) as a cofactor.

It localises to the cytoplasm. The catalysed reaction is Endonucleolytic cleavage at a junction such as a reciprocal single-stranded crossover between two homologous DNA duplexes (Holliday junction).. Its function is as follows. Endonuclease that resolves Holliday junction intermediates in genetic recombination. Cleaves mobile four-strand junctions by introducing symmetrical nicks in paired strands. Promotes annealing of linear ssDNA with homologous dsDNA. Required for DNA repair, homologous recombination and chromosome segregation. This Streptococcus thermophilus (strain CNRZ 1066) protein is Holliday junction resolvase RecU.